The sequence spans 334 residues: Protein-methionine-sulfoxide reductase catalytic subunit MsrP (334 aa).

Residues 1 to 44 (MKKNQFLKESDVTAESVFFMKRRQVLKALGISATALSLPHAAHA) constitute a signal peptide (tat-type signal). Mo-molybdopterin is bound by residues asparagine 88, 91–92 (YE), cysteine 146, threonine 181, asparagine 233, arginine 238, and 249–251 (GIK).

Belongs to the MsrP family. In terms of assembly, heterodimer of a catalytic subunit (MsrP) and a heme-binding subunit (MsrQ). It depends on Mo-molybdopterin as a cofactor. Post-translationally, exported by the Tat system. Can also be exported by the Sec system.

The protein resides in the periplasm. It carries out the reaction L-methionyl-[protein] + a quinone + H2O = L-methionyl-(S)-S-oxide-[protein] + a quinol. The enzyme catalyses L-methionyl-[protein] + a quinone + H2O = L-methionyl-(R)-S-oxide-[protein] + a quinol. Functionally, part of the MsrPQ system that repairs oxidized periplasmic proteins containing methionine sulfoxide residues (Met-O), using respiratory chain electrons. Thus protects these proteins from oxidative-stress damage caused by reactive species of oxygen and chlorine. MsrPQ is essential for the maintenance of envelope integrity under bleach stress, rescuing a wide series of structurally unrelated periplasmic proteins from methionine oxidation, including the primary periplasmic chaperone SurA and the lipoprotein Pal. The catalytic subunit MsrP is non-stereospecific, being able to reduce both (R-) and (S-) diastereoisomers of methionine sulfoxide. Can catalyze the reduction of a variety of substrates in vitro, including dimethyl sulfoxide, trimethylamine N-oxide, phenylmethyl sulfoxide and L-methionine sulfoxide. Cannot reduce cyclic N-oxides. Shows no activity as sulfite oxidase. The sequence is that of Protein-methionine-sulfoxide reductase catalytic subunit MsrP from Escherichia coli (strain K12).